We begin with the raw amino-acid sequence, 292 residues long: NAD kinase (292 aa).

The Proton acceptor role is filled by Asp-73. NAD(+) is bound by residues 73 to 74 (DG), 147 to 148 (NE), His-158, Arg-175, Asp-177, 188 to 193 (TGYSLS), and Gln-247.

It belongs to the NAD kinase family. It depends on a divalent metal cation as a cofactor.

The protein localises to the cytoplasm. The enzyme catalyses NAD(+) + ATP = ADP + NADP(+) + H(+). Its function is as follows. Involved in the regulation of the intracellular balance of NAD and NADP, and is a key enzyme in the biosynthesis of NADP. Catalyzes specifically the phosphorylation on 2'-hydroxyl of the adenosine moiety of NAD to yield NADP. The protein is NAD kinase of Buchnera aphidicola subsp. Acyrthosiphon pisum (strain 5A).